The sequence spans 126 residues: Aspartate 1-decarboxylase (126 aa).

The active-site Schiff-base intermediate with substrate; via pyruvic acid is S25. Position 25 is a pyruvic acid (Ser) (S25). T57 contributes to the substrate binding site. Y58 acts as the Proton donor in catalysis. 73–75 contacts substrate; the sequence is GGA.

Belongs to the PanD family. In terms of assembly, heterooctamer of four alpha and four beta subunits. It depends on pyruvate as a cofactor. Is synthesized initially as an inactive proenzyme, which is activated by self-cleavage at a specific serine bond to produce a beta-subunit with a hydroxyl group at its C-terminus and an alpha-subunit with a pyruvoyl group at its N-terminus.

It is found in the cytoplasm. The catalysed reaction is L-aspartate + H(+) = beta-alanine + CO2. It participates in cofactor biosynthesis; (R)-pantothenate biosynthesis; beta-alanine from L-aspartate: step 1/1. Its function is as follows. Catalyzes the pyruvoyl-dependent decarboxylation of aspartate to produce beta-alanine. In Stenotrophomonas maltophilia (strain R551-3), this protein is Aspartate 1-decarboxylase.